A 154-amino-acid polypeptide reads, in one-letter code: MHCPFCRHPDSRVIDSRETDEGQAIRRRRSCPECGRRFTTVETAVLAVVKRSGVTEPFSREKVISGVRRACQGRQVDDDALNLLAQQVEDTVRAAGSPEVPSHEVGLAILGPLRDLDEVAYLRFASVYRSFESADDFEREIQALREHRGVATPG.

Residues 3 to 34 fold into a zinc finger; sequence CPFCRHPDSRVIDSRETDEGQAIRRRRSCPEC. Residues 46–136 form the ATP-cone domain; sequence LAVVKRSGVT…VYRSFESADD (91 aa).

This sequence belongs to the NrdR family. It depends on Zn(2+) as a cofactor.

Functionally, negatively regulates transcription of bacterial ribonucleotide reductase nrd genes and operons by binding to NrdR-boxes. The chain is Transcriptional repressor NrdR from Mycobacterium avium (strain 104).